The following is a 142-amino-acid chain: Transcriptional regulator MraZ (142 aa).

2 consecutive SpoVT-AbrB domains span residues Ala-5–Glu-51 and Ala-77–Thr-120.

It belongs to the MraZ family. In terms of assembly, forms oligomers.

It localises to the cytoplasm. The protein resides in the nucleoid. The chain is Transcriptional regulator MraZ from Delftia acidovorans (strain DSM 14801 / SPH-1).